A 1048-amino-acid chain; its full sequence is Bifunctional heparan sulfate N-deacetylase/N-sulfotransferase (1048 aa).

Residues 1 to 172 are Cytoplasmic-facing; the sequence is MTISGGNQHN…RRCFGINVRR (172 aa). A helical; Signal-anchor for type II membrane protein membrane pass occupies residues 173 to 192; that stretch reads CVLALLAITMVSIFYYTHYV. The tract at residues 192-752 is heparan sulfate N-deacetylase; that stretch reads VDTGVFNGLI…VRHKKIWSKT (561 aa). At 193-1048 the chain is on the lumenal side; that stretch reads DTGVFNGLIQ…WLKDDLSTGT (856 aa). Residues Asn388 and Asn555 are each glycosylated (N-linked (GlcNAc...) asparagine). The tract at residues 753-1048 is heparan sulfate N-sulfotransferase; that stretch reads KNCDSLPKFL…WLKDDLSTGT (296 aa). Lys768 acts as the For sulfotransferase activity in catalysis. 768-772 lines the 3'-phosphoadenylyl sulfate pocket; sequence KTGTT. An N-linked (GlcNAc...) asparagine glycan is attached at Asn823. Ser877 serves as a coordination point for 3'-phosphoadenylyl sulfate. Residue Asn892 is glycosylated (N-linked (GlcNAc...) asparagine). A disulfide bridge links Cys983 with Cys993. Position 998–1002 (998–1002) interacts with 3'-phosphoadenylyl sulfate; it reads KGRQY.

This sequence belongs to the sulfotransferase 1 family. NDST subfamily. In terms of assembly, monomer.

It localises to the golgi apparatus membrane. The catalysed reaction is alpha-D-glucosaminyl-[heparan sulfate](n) + 3'-phosphoadenylyl sulfate = N-sulfo-alpha-D-glucosaminyl-[heparan sulfate](n) + adenosine 3',5'-bisphosphate + 2 H(+). The protein operates within glycan metabolism; heparan sulfate biosynthesis. It functions in the pathway glycan metabolism; heparin biosynthesis. Essential bifunctional enzyme that catalyzes both the N-deacetylation and the N-sulfation of glucosamine (GlcNAc) of the glycosaminoglycan in heparan sulfate. Modifies the GlcNAc-GlcA disaccharide repeating sugar backbone to make N-sulfated heparosan, a prerequisite substrate for later modifications in heparin biosynthesis. Plays a role in diffusion of morphogen wingless (wg) via its role in heparan sulfate proteoglycans (HSPGs) biosynthesis, HSPGs being required for movement of wg morphogens. Required for wg signaling during both embryonic and imaginal disk development. Also required for FGF receptor signaling. In Drosophila melanogaster (Fruit fly), this protein is Bifunctional heparan sulfate N-deacetylase/N-sulfotransferase (sfl).